Here is a 408-residue protein sequence, read N- to C-terminus: Acetate kinase (408 aa).

A Mg(2+)-binding site is contributed by Asn7. Lys14 contributes to the ATP binding site. Position 91 (Arg91) interacts with substrate. The active-site Proton donor/acceptor is the Asp148. Residues 208–212 (HLGNG), 283–285 (DFR), and 331–335 (GIGEN) contribute to the ATP site. Glu384 lines the Mg(2+) pocket.

The protein belongs to the acetokinase family. In terms of assembly, homodimer. Requires Mg(2+) as cofactor. The cofactor is Mn(2+).

Its subcellular location is the cytoplasm. It catalyses the reaction acetate + ATP = acetyl phosphate + ADP. It functions in the pathway metabolic intermediate biosynthesis; acetyl-CoA biosynthesis; acetyl-CoA from acetate: step 1/2. Its function is as follows. Catalyzes the formation of acetyl phosphate from acetate and ATP. Can also catalyze the reverse reaction. In Methanosarcina barkeri (strain Fusaro / DSM 804), this protein is Acetate kinase.